A 334-amino-acid chain; its full sequence is tRNA U34 carboxymethyltransferase (334 aa).

Residues Lys-91, Trp-105, Lys-110, Gly-130, 152 to 154, 181 to 182, Met-196, Tyr-200, and Arg-315 each bind carboxy-S-adenosyl-L-methionine; these read DPT and IE.

Belongs to the class I-like SAM-binding methyltransferase superfamily. CmoB family. As to quaternary structure, homotetramer.

The catalysed reaction is carboxy-S-adenosyl-L-methionine + 5-hydroxyuridine(34) in tRNA = 5-carboxymethoxyuridine(34) in tRNA + S-adenosyl-L-homocysteine + H(+). In terms of biological role, catalyzes carboxymethyl transfer from carboxy-S-adenosyl-L-methionine (Cx-SAM) to 5-hydroxyuridine (ho5U) to form 5-carboxymethoxyuridine (cmo5U) at position 34 in tRNAs. The protein is tRNA U34 carboxymethyltransferase of Klebsiella pneumoniae subsp. pneumoniae (strain ATCC 700721 / MGH 78578).